The sequence spans 344 residues: Eukaryotic translation initiation factor 2 subunit alpha homolog (344 aa).

The S1 motif domain occupies 21–92 (DMAVMIQVKN…EKGYIDLSKR (72 aa)). Position 56 is a phosphoserine; by GCN2 (S56). The tract at residues 312-344 (DNEEMSGDEDSGDEEEDTGMGEVDLDAGAGIIE) is disordered. A compositionally biased stretch (acidic residues) spans 314–336 (EEMSGDEDSGDEEEDTGMGEVDL).

Belongs to the eIF-2-alpha family. In terms of assembly, heterotrimer composed of an alpha, a beta and a gamma chain. Post-translationally, phosphorylated at Ser-56 by GCN2.

Functionally, functions in the early steps of protein synthesis by forming a ternary complex with GTP and initiator tRNA. This complex binds to a 40S ribosomal subunit, followed by mRNA binding to form a 43S pre-initiation complex. Junction of the 60S ribosomal subunit to form the 80S initiation complex is preceded by hydrolysis of the GTP bound to eIF-2 and release of an eIF-2-GDP binary complex. In order for eIF-2 to recycle and catalyze another round of initiation, the GDP bound to eIF-2 must exchange with GTP by way of a reaction catalyzed by eIF-2B. The sequence is that of Eukaryotic translation initiation factor 2 subunit alpha homolog from Arabidopsis thaliana (Mouse-ear cress).